A 1250-amino-acid chain; its full sequence is DNA-directed RNA polymerase subunit beta (1250 aa).

The disordered stretch occupies residues 1215–1250; the sequence is QDLNDDDINPDDTIDAELDDNLFDDDFDDTFDDDDL.

Belongs to the RNA polymerase beta chain family. As to quaternary structure, the RNAP catalytic core consists of 2 alpha, 1 beta, 1 beta' and 1 omega subunit. When a sigma factor is associated with the core the holoenzyme is formed, which can initiate transcription.

It carries out the reaction RNA(n) + a ribonucleoside 5'-triphosphate = RNA(n+1) + diphosphate. Functionally, DNA-dependent RNA polymerase catalyzes the transcription of DNA into RNA using the four ribonucleoside triphosphates as substrates. The protein is DNA-directed RNA polymerase subunit beta of Acetivibrio thermocellus (strain ATCC 27405 / DSM 1237 / JCM 9322 / NBRC 103400 / NCIMB 10682 / NRRL B-4536 / VPI 7372) (Clostridium thermocellum).